The following is a 305-amino-acid chain: UPF0450 protein C17orf58 homolog (305 aa).

The first 22 residues, Met1–Ala22, serve as a signal peptide directing secretion. Residues Glu18 to Ala160 form a disordered region. A compositionally biased stretch (basic and acidic residues) spans Val21–Pro39. Disulfide bonds link Cys159–Cys233, Cys163–Cys237, and Cys174–Cys304. The 146-residue stretch at Cys159–Cys304 folds into the NTR domain.

Belongs to the UPF0450 family.

This chain is UPF0450 protein C17orf58 homolog, found in Mus musculus (Mouse).